Reading from the N-terminus, the 185-residue chain is A-type ATP synthase subunit E (185 aa).

Belongs to the V-ATPase E subunit family. As to quaternary structure, has multiple subunits with at least A(3), B(3), C, D, E, F, H, I and proteolipid K(x).

Its subcellular location is the cell membrane. Component of the A-type ATP synthase that produces ATP from ADP in the presence of a proton gradient across the membrane. This chain is A-type ATP synthase subunit E, found in Thermoplasma acidophilum (strain ATCC 25905 / DSM 1728 / JCM 9062 / NBRC 15155 / AMRC-C165).